Here is a 279-residue protein sequence, read N- to C-terminus: Rhamnulose-1-phosphate aldolase (279 aa).

Residue E115 is part of the active site. H138, H140, and H209 together coordinate Zn(2+).

This sequence belongs to the aldolase class II family. RhaD subfamily. Requires Zn(2+) as cofactor.

It is found in the cytoplasm. It catalyses the reaction L-rhamnulose 1-phosphate = (S)-lactaldehyde + dihydroxyacetone phosphate. Its pathway is carbohydrate degradation; L-rhamnose degradation; glycerone phosphate from L-rhamnose: step 3/3. Functionally, catalyzes the reversible cleavage of L-rhamnulose-1-phosphate to dihydroxyacetone phosphate (DHAP) and L-lactaldehyde. This is Rhamnulose-1-phosphate aldolase from Enterococcus faecalis (strain ATCC 700802 / V583).